The following is a 461-amino-acid chain: Tip elongation protein 1 (461 aa).

A CAP-Gly domain is found at 22–69; the sequence is GEVENRKGVYVGLELLPEFAEFGKNRGVVDGREYFKTKNNEKTGIFVP. 5 positions are modified to phosphoserine: serine 82, serine 84, serine 289, serine 294, and serine 305. Residues 134-418 are a coiled coil; that stretch reads TEKILQKRIE…RMSPAEFELE (285 aa). Residues 278–303 show a composition bias toward polar residues; that stretch reads KANSSTANEKLSHMESSSPTLTNASF. A disordered region spans residues 278–323; it reads KANSSTANEKLSHMESSSPTLTNASFESPKRGKGSNDLPENHPQRR. Threonine 367 bears the Phosphothreonine mark. Residues 417-437 are disordered; sequence LETTQEVEENDSDSHDDEETW.

In terms of assembly, monomer. Interacts with tea1 and tea2. Interacts with tea4 in the presence of tea1.

The protein resides in the cytoplasm. Its subcellular location is the cytoskeleton. Its function is as follows. Has a role in stabilizing and targeting the growing tips of the microtubules along the long axis of the cell, directing them to the ends of the cell. Acts as a cargo for tea2. This chain is Tip elongation protein 1 (tip1), found in Schizosaccharomyces pombe (strain 972 / ATCC 24843) (Fission yeast).